The chain runs to 204 residues: 3-isopropylmalate dehydratase small subunit (204 aa).

Belongs to the LeuD family. LeuD type 1 subfamily. As to quaternary structure, heterodimer of LeuC and LeuD.

The catalysed reaction is (2R,3S)-3-isopropylmalate = (2S)-2-isopropylmalate. The protein operates within amino-acid biosynthesis; L-leucine biosynthesis; L-leucine from 3-methyl-2-oxobutanoate: step 2/4. Functionally, catalyzes the isomerization between 2-isopropylmalate and 3-isopropylmalate, via the formation of 2-isopropylmaleate. The sequence is that of 3-isopropylmalate dehydratase small subunit from Clavibacter michiganensis subsp. michiganensis (strain NCPPB 382).